The following is a 162-amino-acid chain: Transcription elongation factor GreA (162 aa).

Positions N48 to Q76 form a coiled coil. A disordered region spans residues G111–L132.

This sequence belongs to the GreA/GreB family.

Necessary for efficient RNA polymerase transcription elongation past template-encoded arresting sites. The arresting sites in DNA have the property of trapping a certain fraction of elongating RNA polymerases that pass through, resulting in locked ternary complexes. Cleavage of the nascent transcript by cleavage factors such as GreA or GreB allows the resumption of elongation from the new 3'terminus. GreA releases sequences of 2 to 3 nucleotides. The sequence is that of Transcription elongation factor GreA from Oenococcus oeni (strain ATCC BAA-331 / PSU-1).